Reading from the N-terminus, the 373-residue chain is Filamin-binding LIM protein 1 (373 aa).

The tract at residues 1–70 (MASKPEKRVA…SPWTTPGRAA (70 aa)) is filamin-binding. Disordered regions lie at residues 41 to 119 (RPWE…PSEE) and 135 to 176 (QLHL…PVEK). Over residues 104 to 114 (LPPPPPPPPVL) the composition is skewed to pro residues. LIM zinc-binding domains lie at 181–242 (DICA…TLER), 243–300 (CGKC…RKFA), and 301–370 (PVCS…RSAA). Residues 276-373 (IGDESFALGS…HVKRSAAGCC (98 aa)) are FERMT2-binding.

As to quaternary structure, interacts with NKX2-5. Isoform 1 and isoform 3 interact with FERMT2, FLNA, FLNB and FLNC. Isoform 2 interacts with FLNB. Isoform 1 and isoform 3 are expressed in heart, kidney, lung, pancreas, placenta and platelets. Isoform 2 is expressed in brain, heart, kidney, lung, pancreas, placenta, skeletal muscle and platelets.

The protein localises to the cell junction. It is found in the focal adhesion. The protein resides in the cytoplasm. It localises to the cytoskeleton. Its subcellular location is the stress fiber. Functionally, serves as an anchoring site for cell-ECM adhesion proteins and filamin-containing actin filaments. Is implicated in cell shape modulation (spreading) and motility. May participate in the regulation of filamin-mediated cross-linking and stabilization of actin filaments. May also regulate the assembly of filamin-containing signaling complexes that control actin assembly. Promotes dissociation of FLNA from ITGB3 and ITGB7. Promotes activation of integrins and regulates integrin-mediated cell-cell adhesion. The sequence is that of Filamin-binding LIM protein 1 (FBLIM1) from Homo sapiens (Human).